A 564-amino-acid chain; its full sequence is MTETAKRPLYVPHAGPSLLEMPLLNKGSAFSTQERIDFNLQGLLPHNIETIEEQTERAYSQYNLCNTDLDRHIFLRSIQDNNETLFFRLLEEHLEEMMPIIYTPTVGQACQEFSKIYRTHRGLFISYPDRERIDDILRSATKNNVKIVVVTDSERILGLGDQGIGGMGIPIGKLSLYTACGGISPAYTLPVVLDVGTNNPDLLNDPMYMGWRHERVSGAQYEEFVDLFIQAIKRRWPNVLLQFEDFAQTNAMPLLERYKDELCCFNDDIQGTAAVAVGTLLAACKAKGEKLSEQTVTFVGAGSAGCGIAEQIIAAMQLEGLDEAQARRRIFMVDRWGLLTDDMSNLLDFQHRLAQKRADLGAWGGQQGDDLALLEVIRNARPTVLIGVSGQRGLFSEEVIRELHSHCKQPLVMPLSNPTSRVEATPQEILNWTDGQALVATGSPFQPVQVGDKRIPIAQCNNAYIFPGIGLGVIAARANRVTEGMLMAAANALANCSPIVTQGEGAVLPALGDIREVSKRIAVAVAKQAQAEGKALHTSDEVLNDAIEANFWFPRYRAYRRTSF.

Tyr102 functions as the Proton donor in the catalytic mechanism. Arg155 lines the NAD(+) pocket. Lys173 serves as the catalytic Proton acceptor. The a divalent metal cation site is built by Glu244, Asp245, and Asp268. NAD(+)-binding residues include Asp268 and Asn417.

It belongs to the malic enzymes family. As to quaternary structure, homotetramer. Requires Mg(2+) as cofactor. The cofactor is Mn(2+).

It catalyses the reaction (S)-malate + NAD(+) = pyruvate + CO2 + NADH. The catalysed reaction is oxaloacetate + H(+) = pyruvate + CO2. This is NAD-dependent malic enzyme from Pseudomonas aeruginosa (strain ATCC 15692 / DSM 22644 / CIP 104116 / JCM 14847 / LMG 12228 / 1C / PRS 101 / PAO1).